The primary structure comprises 30 residues: Uperin-6.1 (30 aa).

Expressed by the skin dorsal glands.

It localises to the secreted. This Uperoleia inundata (Floodplain toadlet) protein is Uperin-6.1.